A 793-amino-acid chain; its full sequence is Probable phosphoketolase (793 aa).

It belongs to the XFP family. The cofactor is thiamine diphosphate.

The protein is Probable phosphoketolase of Gloeobacter violaceus (strain ATCC 29082 / PCC 7421).